The sequence spans 390 residues: Glucose-fructose oxidoreductase domain-containing protein 1 (390 aa).

Residues 1–21 form the signal peptide; sequence MLPGVGVFGTSLTARVIIPLL.

It belongs to the Gfo/Idh/MocA family. Homodimer. Interacts with NKIRAS2.

The protein localises to the secreted. Functionally, probably catalytically inactive enzyme. Does not bind NAD or NADP. This Mus musculus (Mouse) protein is Glucose-fructose oxidoreductase domain-containing protein 1 (Gfod1).